The primary structure comprises 395 residues: Pyridinium-3,5-bisthiocarboxylic acid mononucleotide nickel insertion protein (395 aa).

The protein belongs to the LarC family.

It carries out the reaction Ni(II)-pyridinium-3,5-bisthiocarboxylate mononucleotide = pyridinium-3,5-bisthiocarboxylate mononucleotide + Ni(2+). Functionally, involved in the biosynthesis of a nickel-pincer cofactor ((SCS)Ni(II) pincer complex). Binds Ni(2+), and functions in nickel delivery to pyridinium-3,5-bisthiocarboxylic acid mononucleotide (P2TMN), to form the mature cofactor. Is thus probably required for the activation of nickel-pincer cofactor-dependent enzymes. The protein is Pyridinium-3,5-bisthiocarboxylic acid mononucleotide nickel insertion protein of Staphylococcus epidermidis (strain ATCC 12228 / FDA PCI 1200).